Consider the following 435-residue polypeptide: uncharacterized protein (435 aa).

The residue at position 47 (S47) is a Phosphoserine. Disordered stretches follow at residues 174 to 210 (LKKK…DDED) and 290 to 372 (KAEA…EDNK). Over residues 195–210 (NEEDEEDEEDEEDDED) the composition is skewed to acidic residues. The span at 290–304 (KAEATGEAHSKDVSA) shows a compositional bias: basic and acidic residues. The span at 308–318 (SANTTTSFDET) shows a compositional bias: polar residues. 2 stretches are compositionally biased toward basic and acidic residues: residues 322 to 340 (EDEK…KEAN) and 347 to 361 (VADR…KVND).

Its subcellular location is the cytoplasm. This is an uncharacterized protein from Saccharomyces cerevisiae (strain ATCC 204508 / S288c) (Baker's yeast).